The sequence spans 72 residues: DNA-directed RNA polymerase subunit epsilon (72 aa).

This sequence belongs to the RNA polymerase subunit epsilon family. As to quaternary structure, RNAP is composed of a core of 2 alpha, a beta and a beta' subunit. The core is associated with a delta subunit, and at least one of epsilon or omega. When a sigma factor is associated with the core the holoenzyme is formed, which can initiate transcription.

It catalyses the reaction RNA(n) + a ribonucleoside 5'-triphosphate = RNA(n+1) + diphosphate. In terms of biological role, a non-essential component of RNA polymerase (RNAP). This Staphylococcus haemolyticus (strain JCSC1435) protein is DNA-directed RNA polymerase subunit epsilon.